Reading from the N-terminus, the 940-residue chain is Isoleucine--tRNA ligase (940 aa).

Positions 58 to 68 (PYANGSIHIGH) match the 'HIGH' region motif. Glu-564 lines the L-isoleucyl-5'-AMP pocket. Residues 605-609 (KMSKS) carry the 'KMSKS' region motif. An ATP-binding site is contributed by Lys-608. The Zn(2+) site is built by Cys-903, Cys-906, Cys-923, and Cys-926.

The protein belongs to the class-I aminoacyl-tRNA synthetase family. IleS type 1 subfamily. As to quaternary structure, monomer. Zn(2+) serves as cofactor.

It localises to the cytoplasm. The catalysed reaction is tRNA(Ile) + L-isoleucine + ATP = L-isoleucyl-tRNA(Ile) + AMP + diphosphate. In terms of biological role, catalyzes the attachment of isoleucine to tRNA(Ile). As IleRS can inadvertently accommodate and process structurally similar amino acids such as valine, to avoid such errors it has two additional distinct tRNA(Ile)-dependent editing activities. One activity is designated as 'pretransfer' editing and involves the hydrolysis of activated Val-AMP. The other activity is designated 'posttransfer' editing and involves deacylation of mischarged Val-tRNA(Ile). This chain is Isoleucine--tRNA ligase, found in Shewanella baltica (strain OS155 / ATCC BAA-1091).